Reading from the N-terminus, the 384-residue chain is MAKHLFTSESVSEGHPDKIADQISDAVLDAILEQDPKARVACETYVKTGMVLVGGEITTSAWVDIEEITRNTVREIGYVHSDMGFDANSCAVLSAIGKQSPDINQGVDRADPLEQGAGDQGLMFGYATNETDVLMPAPITYAHRLVQRQAEVRKNGTLPWLRPDAKSQVTFQYDDGKIVGIDAVVLSTQHSEEIDQKSLQEAVMEEIIKPILPAEWLTSATKFFINPTGRFVIGGPMGDCGLTGRKIIVDTYGGMARHGGGAFSGKDPSKVDRSAAYAARYVAKNIVAAGLADRCEIQVSYAIGVAEPTSIMVETFGTEKVPSEQLTLLVREFFDLRPYGLIQMLDLLHPIYKETAAYGHFGREHFPWEKTDKAQLLREAAGLK.

Residue histidine 15 participates in ATP binding. Aspartate 17 provides a ligand contact to Mg(2+). Glutamate 43 is a K(+) binding site. Glutamate 56 and glutamine 99 together coordinate L-methionine. Residues 99–109 (QSPDINQGVDR) are flexible loop. Residues 164–166 (DAK), 230–231 (RF), aspartate 239, 245–246 (RK), alanine 262, and lysine 266 each bind ATP. An L-methionine-binding site is contributed by aspartate 239. Lysine 270 provides a ligand contact to L-methionine.

The protein belongs to the AdoMet synthase family. As to quaternary structure, homotetramer; dimer of dimers. Mg(2+) is required as a cofactor. The cofactor is K(+).

The protein resides in the cytoplasm. The catalysed reaction is L-methionine + ATP + H2O = S-adenosyl-L-methionine + phosphate + diphosphate. It functions in the pathway amino-acid biosynthesis; S-adenosyl-L-methionine biosynthesis; S-adenosyl-L-methionine from L-methionine: step 1/1. In terms of biological role, catalyzes the formation of S-adenosylmethionine (AdoMet) from methionine and ATP. The overall synthetic reaction is composed of two sequential steps, AdoMet formation and the subsequent tripolyphosphate hydrolysis which occurs prior to release of AdoMet from the enzyme. This chain is S-adenosylmethionine synthase, found in Escherichia fergusonii (strain ATCC 35469 / DSM 13698 / CCUG 18766 / IAM 14443 / JCM 21226 / LMG 7866 / NBRC 102419 / NCTC 12128 / CDC 0568-73).